A 185-amino-acid chain; its full sequence is Large ribosomal subunit protein uL5 (185 aa).

This sequence belongs to the universal ribosomal protein uL5 family. Part of the 50S ribosomal subunit; part of the 5S rRNA/L5/L18/L25 subcomplex. Contacts the 5S rRNA and the P site tRNA. Forms a bridge to the 30S subunit in the 70S ribosome.

This is one of the proteins that bind and probably mediate the attachment of the 5S RNA into the large ribosomal subunit, where it forms part of the central protuberance. In the 70S ribosome it contacts protein S13 of the 30S subunit (bridge B1b), connecting the 2 subunits; this bridge is implicated in subunit movement. Contacts the P site tRNA; the 5S rRNA and some of its associated proteins might help stabilize positioning of ribosome-bound tRNAs. In Streptomyces coelicolor (strain ATCC BAA-471 / A3(2) / M145), this protein is Large ribosomal subunit protein uL5.